We begin with the raw amino-acid sequence, 614 residues long: Vitamin B12 transporter BtuB (614 aa).

Residues 1-20 form the signal peptide; the sequence is MIKKASLLTACSVTAFSAWA. A TonB box motif is present at residues 26 to 33; it reads DTLVVTAN. Residues 38 to 152 form the TBDR plug domain; it reads PRSTVLAPTT…IGGVVNIITT (115 aa). Cyanocob(III)alamin-binding positions include Leu-83, Ser-85, Asn-92, and 110–111; that span reads GS. Positions 155-614 constitute a TBDR beta-barrel domain; the sequence is EPGTEISAGW…EYTLSGSYTF (460 aa). Transmembrane regions (beta stranded) follow at residues 158-165, 169-178, and 184-195; these read TEISAGWG, YQNYDVSTQQ, and TRVTLLGDYAHT. Ca(2+) is bound by residues Asp-199, Gln-211, Asp-213, and Asp-215. Beta stranded transmembrane passes span 217–227 and 232–248; these read FLSKTLYGALE and DAWSGFVRGYGYDNRTN. Ca(2+)-binding residues include Tyr-249 and Asp-250. Ala-251 contacts cyanocob(III)alamin. A Ca(2+)-binding site is contributed by Asp-261. Transmembrane regions (beta stranded) follow at residues 263 to 277, 279 to 296, 309 to 325, 328 to 337, 353 to 369, 371 to 381, 385 to 400, 403 to 417, 434 to 443, 449 to 458, 473 to 490, 494 to 509, 517 to 529, and 535 to 550; these read RKLYSQSWDAGLRYN, ELIKSQLITSYSHSKDYN, TLDEMKQYTVQWANNII, HGNVGAGVDW, YDQRNTGIYLTGLQQVG, FTFEGAARSDD, FGRHGTWQTSAGWEFI, YRFIASYGTSYKAPN, KSKQWEGAFE, VNWRISGYRN, YYNEGKARIKGVEATANF, PLTHTVSYDYVDARNA, RRAKQQVKYQLDW, and DWGITYQYLGTRYDKD. Thr-309 is a cyanocob(III)alamin binding site. Cyanocob(III)alamin is bound at residue Arg-517. Tyr-551 serves as a coordination point for cyanocob(III)alamin. The next 3 membrane-spanning stretches (beta stranded) occupy residues 558-572, 585-596, and 602-614; these read TVKMGGVSLWDLAVA, IANLFDKDYETV, and AGREYTLSGSYTF. The TonB C-terminal box signature appears at 597-614; it reads YGYQTAGREYTLSGSYTF.

The protein belongs to the TonB-dependent receptor family. BtuB (TC 1.B.14.3.1) subfamily.

It is found in the cell outer membrane. Involved in the active translocation of vitamin B12 (cyanocobalamin) across the outer membrane to the periplasmic space. It derives its energy for transport by interacting with the trans-periplasmic membrane protein TonB. The protein is Vitamin B12 transporter BtuB of Escherichia coli O157:H7.